The sequence spans 300 residues: Protoheme IX farnesyltransferase (300 aa).

9 consecutive transmembrane segments (helical) span residues 28-48 (VVAL…PTIL), 50-70 (VQPL…AAAL), 100-120 (ALIF…VFTN), 122-142 (LTAW…TAYL), 149-169 (NIVI…TAVT), 176-196 (ALLL…ALAI), 222-242 (CILL…LVGM), 243-263 (SGPL…YKAW), and 280-300 (FSIY…YLWA).

This sequence belongs to the UbiA prenyltransferase family. Protoheme IX farnesyltransferase subfamily.

It is found in the cell inner membrane. The enzyme catalyses heme b + (2E,6E)-farnesyl diphosphate + H2O = Fe(II)-heme o + diphosphate. Its pathway is porphyrin-containing compound metabolism; heme O biosynthesis; heme O from protoheme: step 1/1. Converts heme B (protoheme IX) to heme O by substitution of the vinyl group on carbon 2 of heme B porphyrin ring with a hydroxyethyl farnesyl side group. The protein is Protoheme IX farnesyltransferase of Shewanella oneidensis (strain ATCC 700550 / JCM 31522 / CIP 106686 / LMG 19005 / NCIMB 14063 / MR-1).